The chain runs to 87 residues: MVNMKASMFLTFAGLVLLFVVCYASESEEKEFPKEMLSSIFAVDNDFKQEERNCAGYMRECKEKLCCSGYVCSSRWKWCVLPAPWRR.

The first 24 residues, Met-1–Ala-24, serve as a signal peptide directing secretion. Positions Ser-25–Arg-52 are excised as a propeptide. Intrachain disulfides connect Cys-54-Cys-67, Cys-61-Cys-72, and Cys-66-Cys-79.

This sequence belongs to the neurotoxin 10 (Hwtx-1) family. 51 (Hntx-8) subfamily. Hntx-8 sub-subfamily. In terms of tissue distribution, expressed by the venom gland.

Its subcellular location is the secreted. Functionally, weakly inhibits Kv11.1/KCNH2/ERG1, Kv1.2/KCNA2, Kv1.3/KCNA3, and Kv2.1/KCNB1. In Cyriopagopus hainanus (Chinese bird spider), this protein is U3-theraphotoxin-Hhn1n.